The chain runs to 262 residues: Short-chain Z-isoprenyl diphosphate synthase (262 aa).

The active site involves aspartate 40. Position 40 (aspartate 40) interacts with Mg(2+). Residues 41-44 (GNRR), tryptophan 45, and 86-88 (STE) contribute to the substrate site. The active-site Proton acceptor is asparagine 89. Residues arginine 92, arginine 211, and 217–219 (RLS) each bind substrate. Glutamate 230 is a binding site for Mg(2+).

It belongs to the UPP synthase family. Z-FPP synthase subfamily. It depends on Mg(2+) as a cofactor.

It catalyses the reaction isopentenyl diphosphate + (2E)-geranyl diphosphate = (2Z,6E)-farnesyl diphosphate + diphosphate. The protein operates within phospholipid metabolism; decaprenyl phosphate biosynthesis. Functionally, generates Z-farnesyl diphosphate (Z-FPP) from isopentenyl pyrophosphate (IPP). Z-FPP is the precursor of decaprenyl diphosphate, which has a central role in the biosynthesis of the mycobacterial cell wall. In Mycobacterium bovis (strain ATCC BAA-935 / AF2122/97), this protein is Short-chain Z-isoprenyl diphosphate synthase.